Consider the following 35-residue polypeptide: Small toxic polypeptide LdrB (35 aa).

Residues 10–30 (FWHDLAAPILAGIITAAIVGW) traverse the membrane as a helical segment.

The protein belongs to the Ldr toxic peptide family.

It localises to the cell inner membrane. Its function is as follows. Toxic component of a type I toxin-antitoxin (TA) system. Overexpression causes rapid cell killing, probably by disrupting the cell inner membrane and disruption of ATP synthesis. In Escherichia coli (strain K12), this protein is Small toxic polypeptide LdrB (ldrB).